The primary structure comprises 609 residues: Invertase (609 aa).

Residues 1–14 (MLKLLSLMVPLASA) form the signal peptide. Residues N23, N32, and N36 are each glycosylated (N-linked (GlcNAc...) asparagine). Residues 56 to 59 (WMND), Q77, and 119 to 120 (FS) each bind substrate. The active site involves D59. N128, N129, and N135 each carry an N-linked (GlcNAc...) asparagine glycan. 187–188 (RD) is a substrate binding site. 2 N-linked (GlcNAc...) asparagine glycosylation sites follow: N227 and N233. E245 is a binding site for substrate. N-linked (GlcNAc...) asparagine glycans are attached at residues N257, N267, N277, N284, N291, N298, N303, and N345. W389 contributes to the substrate binding site. N409, N420, N440, N448, N452, N477, N545, and N566 each carry an N-linked (GlcNAc...) asparagine glycan.

It belongs to the glycosyl hydrolase 32 family.

The enzyme catalyses Hydrolysis of terminal non-reducing beta-D-fructofuranoside residues in beta-D-fructofuranosides.. The polypeptide is Invertase (INV1) (Kluyveromyces lactis (strain ATCC 8585 / CBS 2359 / DSM 70799 / NBRC 1267 / NRRL Y-1140 / WM37) (Yeast)).